The following is a 412-amino-acid chain: cAMP-dependent protein kinase regulatory subunit (412 aa).

The interval 1-142 (MSFEEVYEEL…RLKRSVAGNF (142 aa)) is dimerization and phosphorylation. The Pseudophosphorylation motif signature appears at 101–105 (RRQSV). At Ser104 the chain carries Phosphoserine. Residues 143–277 (LFKN…EEVP), Glu224, Arg233, 278–412 (ILSS…STKA), Glu344, and Arg353 each bind 3',5'-cyclic AMP. The interval 392–412 (MGMDNEYGDQSLHRSPPSTKA) is disordered.

This sequence belongs to the cAMP-dependent kinase regulatory chain family. Tetramer, composed of 2 regulatory (R) and 2 catalytic (C) subunits. In the presence of cAMP it dissociates into 2 active monomeric C subunits and an R dimer.

The polypeptide is cAMP-dependent protein kinase regulatory subunit (cgs1) (Schizosaccharomyces pombe (strain 972 / ATCC 24843) (Fission yeast)).